The sequence spans 109 residues: SLYAPSALVLTIGQGDSASAGIQRAVTLSCMPTPSGTHPDARDACAQLRQADGKFDELTATKAGTYCTKEWNPVTVTATGVWEGQRVNYSHTFGNPCMAKAAKSTVFSF.

2 cysteine pairs are disulfide-bonded: Cys-30–Cys-45 and Cys-67–Cys-97.

It belongs to the protease inhibitor I16 (SSI) family. As to quaternary structure, homodimer.

It localises to the secreted. In Streptomyces orinoci (Streptoverticillium orinoci), this protein is Protease inhibitor SIL-V2.